The primary structure comprises 418 residues: Gamma-glutamyl phosphate reductase (418 aa).

Belongs to the gamma-glutamyl phosphate reductase family.

The protein resides in the cytoplasm. The enzyme catalyses L-glutamate 5-semialdehyde + phosphate + NADP(+) = L-glutamyl 5-phosphate + NADPH + H(+). The protein operates within amino-acid biosynthesis; L-proline biosynthesis; L-glutamate 5-semialdehyde from L-glutamate: step 2/2. Catalyzes the NADPH-dependent reduction of L-glutamate 5-phosphate into L-glutamate 5-semialdehyde and phosphate. The product spontaneously undergoes cyclization to form 1-pyrroline-5-carboxylate. The chain is Gamma-glutamyl phosphate reductase from Trichlorobacter lovleyi (strain ATCC BAA-1151 / DSM 17278 / SZ) (Geobacter lovleyi).